The sequence spans 126 residues: UPF0102 protein BH12350 (126 aa).

Belongs to the UPF0102 family.

The sequence is that of UPF0102 protein BH12350 from Bartonella henselae (strain ATCC 49882 / DSM 28221 / CCUG 30454 / Houston 1) (Rochalimaea henselae).